We begin with the raw amino-acid sequence, 352 residues long: Protein Wnt-3a (352 aa).

The signal sequence occupies residues 1–18 (MAPLGYLLVLCSLKQALG). Disulfide bonds link Cys-77–Cys-88, Cys-128–Cys-136, Cys-138–Cys-155, Cys-203–Cys-217, Cys-205–Cys-212, Cys-281–Cys-312, Cys-297–Cys-307, Cys-311–Cys-351, Cys-327–Cys-342, Cys-329–Cys-339, and Cys-334–Cys-335. An N-linked (GlcNAc...) asparagine glycan is attached at Asn-87. Ser-209 is lipidated: O-palmitoleoyl serine; by PORCN. The N-linked (GlcNAc...) asparagine glycan is linked to Asn-298.

The protein belongs to the Wnt family. Forms a soluble 1:1 complex with AFM; this prevents oligomerization and is required for prolonged biological activity. The complex with AFM may represent the physiological form in body fluids. Homooligomer; disulfide-linked, leading to inactivation. Interacts with APCDD1 and WLS. Component of the Wnt-Fzd-LRP5-LRP6 signaling complex that contains a WNT protein, a FZD protein and LRP5 or LRP6. Interacts directly in the complex with LRP6. Interacts with PORCN. Interacts with glypican GPC3. Interacts with PKD1 (via extracellular domain). Interacts with FZD5. Proteolytic processing by TIKI1 and TIKI2 promotes oxidation and formation of large disulfide-bond oligomers, leading to inactivation of WNT3A. In terms of processing, disulfide bonds have critical and distinct roles in secretion and activity. Loss of each conserved cysteine in WNT3A results in high molecular weight oxidized Wnt oligomers, which are formed through inter-Wnt disulfide bonding. Post-translationally, palmitoleoylation by PORCN is required for efficient binding to frizzled receptors. Palmitoleoylation is required for proper trafficking to cell surface, vacuolar acidification is critical to release palmitoleoylated WNT3A from WLS in secretory vesicles. Depalmitoleoylated by NOTUM, leading to inhibit Wnt signaling pathway, possibly by promoting disulfide bond formation and oligomerization. Dorsal portion of the neural tube (developing roof plate), and mesenchyme tissue surrounding the umbilical veins.

The protein localises to the secreted. It localises to the extracellular space. The protein resides in the extracellular matrix. Ligand for members of the frizzled family of seven transmembrane receptors. Functions in the canonical Wnt signaling pathway that results in activation of transcription factors of the TCF/LEF family. Required for normal embryonic mesoderm development and formation of caudal somites. Required for normal morphogenesis of the developing neural tube. Mediates self-renewal of the stem cells at the bottom on intestinal crypts (in vitro). In Mus musculus (Mouse), this protein is Protein Wnt-3a (Wnt3a).